A 408-amino-acid chain; its full sequence is MASSTHPKRGSLTIAGTGIATLAHMTLETVSHIKEADKVYYIVTDPVTQAFIEENAKGPTFDLSVYYDADKYRYTSYVQMAEVMLNAVREGCNVLGLFYGHPGIFVSPSHRALAIAREEGYEARMLPGVSAEDYMFADLGLDPALPGCVCYEATNFLIRNKPLNPATHNILWQVGAVGITAMDFENSKFSLLVDRLERDLGPNHKVVHYVGAVLPQSATIMETYTIAELRKPEVIKRISTTSSTFYIPPRDSEAIDYDMVARLGIPPEKYRKIPSYPPNQWAGPNYTSTPAYGPEEKAAVSQLANHVVPNSYKTLHASPAMKKVMIDLATDRSLYKKYEANRDAFVDAVKGLTELEKVALKMGTDGSVYKVMSATQADIELGKEPSIEELEEGRGRLLLVVITAAVVV.

The methyltransferase domain stretch occupies residues 1-250 (MASSTHPKRG…TSSTFYIPPR (250 aa)). Active-site residues include R73, Y77, and Y99. 8 residues coordinate S-adenosyl-L-methionine: Y99, H101, I104, A131, Q173, G211, S242, and T244. Positions 251-375 (DSEAIDYDMV…GSVYKVMSAT (125 aa)) are clasp domain. Positions 371 to 385 (VMSATQADIELGKEP) are precursor leader. V401 is modified (N-methylvaline). An N-methylisoleucine modification is found at I402. Position 406 is an N-methylvaline (V406).

This sequence in the N-terminal section; belongs to the precorrin methyltransferase family. As to quaternary structure, homodimer. SveMA automethylates at Val-401, Ile-402 and Val-406 before being processed by a prolyloligopeptidase which likely forms a peptidyl ester upon removal of the follower propeptide, which then undergoes macrocyclization with the N-terminus of the modified core peptide. Peptide backbone alpha-N-methylations change the physicochemical properties of amide bonds to provide structural constraints and other favorable characteristics including biological membrane permeability to peptides.

The protein operates within secondary metabolite biosynthesis. Fusion protein of the methyltransferase sveM and a type I borosin core peptide; part of the gene cluster that mediates the biosynthesis of a type I borosin, a highly methylated cyclic peptide with potent biological activities. Type I borosins derive from the C-terminus of the fusion protein, and it is the same protein that methylates its own C-terminus using S-adenosyl methionine (SAM). The C-terminus is subsequently cleaved off and macrocyclized by a prolyloligopeptidase to give the final product. The polypeptide is Methyltransferase/ribosomally synthesized type I borosin cyclic peptide precursor sveMA (Serendipita vermifera subsp. bescii (Mycorrhizal fungus)).